We begin with the raw amino-acid sequence, 219 residues long: UPF0502 protein Gmet_0262 (219 aa).

The protein belongs to the UPF0502 family.

This chain is UPF0502 protein Gmet_0262, found in Geobacter metallireducens (strain ATCC 53774 / DSM 7210 / GS-15).